The sequence spans 95 residues: Small ubiquitin-related modifier 2-B (95 aa).

Lys-11 participates in a covalent cross-link: Glycyl lysine isopeptide (Lys-Gly) (interchain with G-Cter in SUMO). The 80-residue stretch at 16-95 folds into the Ubiquitin-like domain; the sequence is DHINLKVAGQ…VFQQQTGGSY (80 aa). A Glycyl lysine isopeptide (Gly-Lys) (interchain with K-? in acceptor proteins) cross-link involves residue Gly-93. Residues 94–95 constitute a propeptide that is removed on maturation; the sequence is SY.

This sequence belongs to the ubiquitin family. SUMO subfamily. Interacts with sae2 and ube2i. Covalently attached to a number of proteins, including top2. Polymeric chains can be formed through Lys-11 cross-linking. In terms of processing, cleavage of precursor form by a sentrin-specific protease is necessary for function.

The protein localises to the nucleus. Ubiquitin-like protein that can be covalently attached to proteins as a monomer or as a lysine-linked polymer. Covalent attachment via an isopeptide bond to its substrates requires prior activation by the E1 complex sae1-sae2 and linkage to the E2 enzyme ube2i, and can be promoted by an E3 ligase such as pias1-4. This post-translational modification on lysine residues of proteins plays a crucial role in a number of cellular processes such as nuclear transport, DNA replication and repair, mitosis and signal transduction. Polymeric sumo2 chains are also susceptible to polyubiquitination which functions as a signal for proteasomal degradation of modified proteins. The sequence is that of Small ubiquitin-related modifier 2-B (sumo2-b) from Xenopus laevis (African clawed frog).